The primary structure comprises 298 residues: Esterase Rv0045c (298 aa).

S122 (nucleophile) is an active-site residue. Catalysis depends on residues D146 and H277.

It belongs to the AB hydrolase superfamily. As to quaternary structure, monomer.

It catalyses the reaction a carboxylic ester + H2O = an alcohol + a carboxylate + H(+). The enzyme catalyses a butanoate ester + H2O = an aliphatic alcohol + butanoate + H(+). It carries out the reaction an acetyl ester + H2O = an aliphatic alcohol + acetate + H(+). The catalysed reaction is a hexanoate ester + H2O = an aliphatic alcohol + hexanoate + H(+). It catalyses the reaction a tetradecanoate ester + H2O = an aliphatic alcohol + tetradecanoate + H(+). With respect to regulation, hydrolysis of a fluorogenic ester substrate (MOAME) is allosterically inhibited by divalent transition metal cations (Cu(2+), Zn(2+), Ni(2+) and Co(2+)). Inhibition is largely due to a two order of magnitude drop in kcat, with relatively little change in KM. The thermal stability decreases with increasing concentrations of Ni(2+). Functionally, esterase likely involved in ester/lipid metabolism. Shows strong substrate selectivity toward short, straight chain alkyl esters with the highest activity toward four atom chains. The physiological substrate is unknown. Is able to hydrolyze ester bonds within a wide range of p-nitrophenyl derivatives (C2-C14) in vitro. The chain is Esterase Rv0045c from Mycobacterium tuberculosis (strain ATCC 25618 / H37Rv).